The chain runs to 293 residues: ATP phosphoribosyltransferase (293 aa).

The protein belongs to the ATP phosphoribosyltransferase family. Long subfamily. The cofactor is Mg(2+).

It is found in the cytoplasm. The catalysed reaction is 1-(5-phospho-beta-D-ribosyl)-ATP + diphosphate = 5-phospho-alpha-D-ribose 1-diphosphate + ATP. It functions in the pathway amino-acid biosynthesis; L-histidine biosynthesis; L-histidine from 5-phospho-alpha-D-ribose 1-diphosphate: step 1/9. Feedback inhibited by histidine. Functionally, catalyzes the condensation of ATP and 5-phosphoribose 1-diphosphate to form N'-(5'-phosphoribosyl)-ATP (PR-ATP). Has a crucial role in the pathway because the rate of histidine biosynthesis seems to be controlled primarily by regulation of HisG enzymatic activity. The protein is ATP phosphoribosyltransferase of Nitratidesulfovibrio vulgaris (strain DSM 19637 / Miyazaki F) (Desulfovibrio vulgaris).